An 863-amino-acid chain; its full sequence is Bifunctional uridylyltransferase/uridylyl-removing enzyme (863 aa).

The uridylyltransferase stretch occupies residues 1 to 328; it reads MLFSPTLSSL…SSNQDTVIDQ (328 aa). The interval 329–687 is uridylyl-removing; that stretch reads LDDDFQLINQ…ISNRFSLGGT (359 aa). Residues 446–568 enclose the HD domain; it reads VDEHTLRVML…MQNQVRLDYL (123 aa). ACT domains follow at residues 688–764 and 794–863; these read EVFI…KLPA and EMEL…QQIR.

Belongs to the GlnD family. Mg(2+) serves as cofactor.

The enzyme catalyses [protein-PII]-L-tyrosine + UTP = [protein-PII]-uridylyl-L-tyrosine + diphosphate. It carries out the reaction [protein-PII]-uridylyl-L-tyrosine + H2O = [protein-PII]-L-tyrosine + UMP + H(+). With respect to regulation, uridylyltransferase (UTase) activity is inhibited by glutamine, while glutamine activates uridylyl-removing (UR) activity. In terms of biological role, modifies, by uridylylation and deuridylylation, the PII regulatory proteins (GlnB and homologs), in response to the nitrogen status of the cell that GlnD senses through the glutamine level. Under low glutamine levels, catalyzes the conversion of the PII proteins and UTP to PII-UMP and PPi, while under higher glutamine levels, GlnD hydrolyzes PII-UMP to PII and UMP (deuridylylation). Thus, controls uridylylation state and activity of the PII proteins, and plays an important role in the regulation of nitrogen assimilation and metabolism. The chain is Bifunctional uridylyltransferase/uridylyl-removing enzyme from Haemophilus influenzae (strain ATCC 51907 / DSM 11121 / KW20 / Rd).